The sequence spans 996 residues: Phototropin-1 (996 aa).

The tract at residues 1-184 (MEPTEKPSTK…PGGRSGIPRV (184 aa)) is disordered. A phosphoserine mark is found at Ser-23 and Ser-58. Polar residues predominate over residues 49–59 (QNLSDPRGTSP). Residues 60-70 (QPRPQQEPAPS) show a composition bias toward pro residues. Residues 141–153 (SGGTENDPNGKKT) show a composition bias toward polar residues. Residues 155-166 (SQRNSQNSCRSS) show a composition bias toward low complexity. The 74-residue stretch at 184–257 (VSEDLKDALS…AKIRETLAAG (74 aa)) folds into the PAS 1 domain. A Phosphoserine modification is found at Ser-185. Asn-233 is a binding site for FMN. Cys-234 carries the S-4a-FMN cysteine modification. FMN contacts are provided by Arg-235, Gln-238, Arg-251, Asn-266, Asn-276, Gln-297, and Lys-302. The region spanning 258-312 (NNYCGRILNYKKDGTSFWNLLTIAPIKDESGKVLKFIGMQVEVSKHTEGAKEKAL) is the PAC 1 domain. Phosphoserine is present on residues Ser-350, Ser-376, and Ser-410. Disordered regions lie at residues 351–413 (ESTN…SLSF) and 434–453 (YGEE…SVDD). The segment covering 434–443 (YGEEDDEISD) has biased composition (acidic residues). Residues 444 to 453 (RDERPESVDD) show a composition bias toward basic and acidic residues. Ser-450 carries the phosphoserine modification. Residues 462 to 535 (KGIDLATTLE…KKIRNAIDNQ (74 aa)) form the PAS 2 domain. Asn-511 serves as a coordination point for FMN. Cys-512 bears the S-4a-FMN cysteine mark. The FMN site is built by Arg-513, Gln-516, Arg-529, Asn-544, Asn-554, Phe-556, and Gln-575. The region spanning 536–590 (TEVTVQLINYTKSGKKFWNIFHLQPMRDQKGEVQYFIGVQLDGSKHVEPVRNVIE) is the PAC 2 domain. The 290-residue stretch at 663 to 952 (FKPVKPLGSG…ANEVKQHSFF (290 aa)) folds into the Protein kinase domain. ATP-binding positions include 669-677 (LGSGDTGSV) and Lys-692. Asp-788 acts as the Proton acceptor in catalysis. An activation loop region spans residues 806-862 (DFDLSCLTSCKPQLLIPSIDEKKKKKQQKSQQTPIFMAEPMRASNSFVGTEEYIAPE).

Belongs to the protein kinase superfamily. AGC Ser/Thr protein kinase family. In terms of assembly, homodimer; disulfide-linked. Interacts with PKS1, PKS2, RPT2, RPT3, PHOT2 and BLUS1. Subunit of a complex made of CAR6, PHOT1 and RPT3/NPH3. Associates with CBC1 and CBC2. Binds to BHP. Requires FMN as cofactor. Autophosphorylated at Ser-185, Ser-350 and Ser-410 in response to blue light irradiation. Post-translationally, 2 molecules of FMN bind covalently to cysteines after exposure to blue light and are reversed in the dark. As to expression, present in guard cells (at protein level).

The protein resides in the cell membrane. The protein localises to the cytoplasm. It carries out the reaction L-seryl-[protein] + ATP = O-phospho-L-seryl-[protein] + ADP + H(+). The enzyme catalyses L-threonyl-[protein] + ATP = O-phospho-L-threonyl-[protein] + ADP + H(+). Autophosphorylation is inhibited by staurosporine, but not by tyrphostin 9, sphingosine, GW5074 and BML-265. Functionally, protein kinase that acts as a blue light (BL) photoreceptor in a signal-transduction pathway for photo-induced movements. Triggers the phosphorylation of AHA1 and AHA2 C-terminal penultimate Thr in guard cells to activate them and induce stomatal opening in response to blue light (BL). Also phosphorylates BLUS1, a kinase involved in stomatal opening. Mediates the phosphorylation of CBC1 in stomata, but not of CBC2, in response to blue light. Required for blue light mediated mRNA destabilization. Mediates calcium spiking of extracellular origin in response to a low rate of blue light. Also mediates rapid membrane depolarization and growth inhibition in response to blue light. Necessary for root phototropism. Involved in hypocotyl phototropism under a low rate but not under a high rate of blue light. Contributes to the chloroplast accumulation but seems not to be required for chloroplast translocation. Regulates stomata opening and photomorphogenesis response of leaf tissue. Confers sensitivity to drought. Not involved in hypocotyl elongation inhibition, anthocyanin accumulation or cotyledon opening. Involved in the regulation of leaf position and morphology via the phosphorylation of ABCB19 during blue light responses to modulate auxin distribution. The polypeptide is Phototropin-1 (Arabidopsis thaliana (Mouse-ear cress)).